A 363-amino-acid chain; its full sequence is Peptide chain release factor 1 (363 aa).

Q237 is subject to N5-methylglutamine. The span at 286–296 (EKRRSAEESTR) shows a compositional bias: basic and acidic residues. Residues 286-305 (EKRRSAEESTRRSLVASGDR) form a disordered region.

The protein belongs to the prokaryotic/mitochondrial release factor family. Post-translationally, methylated by PrmC. Methylation increases the termination efficiency of RF1.

The protein localises to the cytoplasm. Functionally, peptide chain release factor 1 directs the termination of translation in response to the peptide chain termination codons UAG and UAA. This Shewanella baltica (strain OS155 / ATCC BAA-1091) protein is Peptide chain release factor 1.